Reading from the N-terminus, the 212-residue chain is High frequency lysogenization protein HflD homolog (212 aa).

The stretch at 92–128 forms a coiled coil; that stretch reads LIALERKLNAKSAALDELGKRIGQLERQLEHFELLSE.

Belongs to the HflD family.

It is found in the cytoplasm. It localises to the cell inner membrane. The chain is High frequency lysogenization protein HflD homolog from Pectobacterium atrosepticum (strain SCRI 1043 / ATCC BAA-672) (Erwinia carotovora subsp. atroseptica).